A 4923-amino-acid polypeptide reads, in one-letter code: Bridge-like lipid transfer protein family member 1 (4923 aa).

Residues 25 to 45 (FVWLLVATIMSCGWIIYLTYY) form a helical membrane-spanning segment. Disordered stretches follow at residues 160 to 179 (NRDE…SVHI), 606 to 631 (HSKS…KPRW), 1203 to 1277 (SLHV…SARL), 1300 to 1334 (FSSE…DSST), 1357 to 1400 (TEEF…SVEG), 1471 to 1494 (TNKR…SEES), 1630 to 1660 (SAAK…DLSI), 1878 to 1948 (RDGV…PDSS), 2191 to 2235 (SKSH…LQCN), 2262 to 2281 (PHRA…RTGN), 2355 to 2375 (NTLD…QEDL), 2550 to 2655 (RYTA…SEQS), 2885 to 2910 (IRQP…VSIN), 3564 to 3596 (YSNS…IKVE), 3645 to 3695 (FSPT…RKSA), 3739 to 3797 (LHPS…SLQS), 3848 to 3884 (GMRD…AKGK), 4017 to 4071 (PTSA…TGPP), 4102 to 4124 (AVTG…SSVT), 4249 to 4309 (DGQT…AAAQ), and 4797 to 4827 (RMFA…EKEE). Low complexity predominate over residues 1210–1226 (SHSSASSSEENSSSSAA). Over residues 1237–1248 (PSPSTELMNVTT) the composition is skewed to polar residues. The segment covering 1260 to 1271 (SPLRSPLKRQSS) has biased composition (low complexity). Residues 1641–1658 (TEGTTPGSLSTPHGQTDL) are compositionally biased toward polar residues. The segment covering 1887 to 1898 (SSGSQTGSGYST) has biased composition (low complexity). Positions 1907–1920 (NDAQSPASEPNNNS) are enriched in polar residues. A compositionally biased stretch (acidic residues) spans 1921–1931 (DSDEQDEGVES). 2 stretches are compositionally biased toward polar residues: residues 2208 to 2218 (PYQSLSYTSGD) and 2267 to 2281 (EQTA…RTGN). Polar residues predominate over residues 2550–2560 (RYTAGSSSPTP). The span at 2606 to 2624 (TRSREPRGRGTLGRSERRT) shows a compositional bias: basic and acidic residues. Basic and acidic residues predominate over residues 3581 to 3595 (KRSDRPREDLPDIKV). Basic and acidic residues predominate over residues 3746–3770 (TEHEDLALRRSCERSSRSLDQDSPP). The segment covering 4017-4039 (PTSATYPSEGQHTPSSTPPSVHN) has biased composition (polar residues). The span at 4044–4056 (PGGPSTGLGSPLG) shows a compositional bias: low complexity. 3 stretches are compositionally biased toward polar residues: residues 4249-4268 (DGQT…TPSH), 4276-4286 (TGRTRSVSDSS), and 4804-4814 (GQKSPTTQQDE). Positions 4816-4827 (SSDKKEEREKEE) are enriched in basic and acidic residues.

The protein localises to the cell membrane. Its subcellular location is the endoplasmic reticulum membrane. It is found in the mitochondrion membrane. In terms of biological role, tube-forming lipid transport protein which provides phosphatidylethanolamine for glycosylphosphatidylinositol (GPI) anchor synthesis in the endoplasmic reticulum. Plays a role in endosomal trafficking and endosome recycling. Also involved in the actin cytoskeleton and cilia structural dynamics. Acts as a regulator of phagocytosis. This chain is Bridge-like lipid transfer protein family member 1 (bltp1), found in Danio rerio (Zebrafish).